The following is a 317-amino-acid chain: Putative HTH-type transcriptional regulatory protein NP_1320A (317 aa).

Positions 132 to 189 constitute an HTH cro/C1-type domain; it reads LSDIRSQEDMSLGKLANELGVSRRTVSKYEDGMSASVEVAAELEEIFDRKLASPVEVL. Residues 143–162 constitute a DNA-binding region (H-T-H motif); it reads LGKLANELGVSRRTVSKYED.

The sequence is that of Putative HTH-type transcriptional regulatory protein NP_1320A from Natronomonas pharaonis (strain ATCC 35678 / DSM 2160 / CIP 103997 / JCM 8858 / NBRC 14720 / NCIMB 2260 / Gabara) (Halobacterium pharaonis).